Reading from the N-terminus, the 275-residue chain is Bis(5'-nucleosyl)-tetraphosphatase, symmetrical (275 aa).

It belongs to the Ap4A hydrolase family.

It carries out the reaction P(1),P(4)-bis(5'-adenosyl) tetraphosphate + H2O = 2 ADP + 2 H(+). In terms of biological role, hydrolyzes diadenosine 5',5'''-P1,P4-tetraphosphate to yield ADP. The protein is Bis(5'-nucleosyl)-tetraphosphatase, symmetrical of Stutzerimonas stutzeri (strain A1501) (Pseudomonas stutzeri).